A 387-amino-acid chain; its full sequence is DNA primase small subunit PriS (387 aa).

Active-site residues include D98, D100, and D289.

It belongs to the eukaryotic-type primase small subunit family. Heterodimer of a small subunit (PriS) and a large subunit (PriL). The cofactor is Mg(2+). Requires Mn(2+) as cofactor.

In terms of biological role, catalytic subunit of DNA primase, an RNA polymerase that catalyzes the synthesis of short RNA molecules used as primers for DNA polymerase during DNA replication. The small subunit contains the primase catalytic core and has DNA synthesis activity on its own. Binding to the large subunit stabilizes and modulates the activity, increasing the rate of DNA synthesis while decreasing the length of the DNA fragments, and conferring RNA synthesis capability. The DNA polymerase activity may enable DNA primase to also catalyze primer extension after primer synthesis. May also play a role in DNA repair. The chain is DNA primase small subunit PriS from Halorubrum lacusprofundi (strain ATCC 49239 / DSM 5036 / JCM 8891 / ACAM 34).